The following is a 502-amino-acid chain: Ubiquitin-like-specific protease 1A (502 aa).

Residues His393, Asp410, and Cys461 contribute to the active site.

This sequence belongs to the peptidase C48 family.

Functionally, protease that catalyzes two essential functions in the SUMO pathway: processing of full-length SUMOs to their mature forms and deconjugation of SUMO from targeted proteins. Cleaves precursors of SUM1 and SUM2, and very inefficiently of SUM3. Seems to be the only ULP1 able to cleave SUM3 precursors. Cleaves SUMO peptides better than SUMO-conjugated proteins. The polypeptide is Ubiquitin-like-specific protease 1A (ULP1A) (Arabidopsis thaliana (Mouse-ear cress)).